The chain runs to 235 residues: Enolase-phosphatase E1 (235 aa).

It belongs to the HAD-like hydrolase superfamily. MasA/MtnC family. In terms of assembly, monomer. The cofactor is Mg(2+).

The catalysed reaction is 5-methylsulfanyl-2,3-dioxopentyl phosphate + H2O = 1,2-dihydroxy-5-(methylsulfanyl)pent-1-en-3-one + phosphate. The protein operates within amino-acid biosynthesis; L-methionine biosynthesis via salvage pathway; L-methionine from S-methyl-5-thio-alpha-D-ribose 1-phosphate: step 3/6. It functions in the pathway amino-acid biosynthesis; L-methionine biosynthesis via salvage pathway; L-methionine from S-methyl-5-thio-alpha-D-ribose 1-phosphate: step 4/6. In terms of biological role, bifunctional enzyme that catalyzes the enolization of 2,3-diketo-5-methylthiopentyl-1-phosphate (DK-MTP-1-P) into the intermediate 2-hydroxy-3-keto-5-methylthiopentenyl-1-phosphate (HK-MTPenyl-1-P), which is then dephosphorylated to form the acireductone 1,2-dihydroxy-3-keto-5-methylthiopentene (DHK-MTPene). This chain is Enolase-phosphatase E1, found in Parvibaculum lavamentivorans (strain DS-1 / DSM 13023 / NCIMB 13966).